Reading from the N-terminus, the 195-residue chain is HTH-type transcriptional regulator BetI (195 aa).

Positions E8 to L68 constitute an HTH tetR-type domain. The H-T-H motif DNA-binding region spans T31 to F50.

The protein operates within amine and polyamine biosynthesis; betaine biosynthesis via choline pathway [regulation]. In terms of biological role, repressor involved in the biosynthesis of the osmoprotectant glycine betaine. It represses transcription of the choline transporter BetT and the genes of BetAB involved in the synthesis of glycine betaine. The polypeptide is HTH-type transcriptional regulator BetI (Burkholderia thailandensis (strain ATCC 700388 / DSM 13276 / CCUG 48851 / CIP 106301 / E264)).